The following is a 348-amino-acid chain: Tripartite motif-containing protein 16-like protein (348 aa).

The B30.2/SPRY domain maps to 139–337; sequence YWTSKPEPST…RIVDLGEEPE (199 aa).

This sequence belongs to the TRIM/RBCC family.

Its subcellular location is the cytoplasm. The protein is Tripartite motif-containing protein 16-like protein (TRIM16L) of Homo sapiens (Human).